We begin with the raw amino-acid sequence, 181 residues long: ATP synthase subunit b, chloroplastic (181 aa).

The helical transmembrane segment at 27–49 threads the bilayer; that stretch reads LATNPINLSVVLGVVIYFGKGVL.

The protein belongs to the ATPase B chain family. As to quaternary structure, F-type ATPases have 2 components, F(1) - the catalytic core - and F(0) - the membrane proton channel. F(1) has five subunits: alpha(3), beta(3), gamma(1), delta(1), epsilon(1). F(0) has four main subunits: a(1), b(1), b'(1) and c(10-14). The alpha and beta chains form an alternating ring which encloses part of the gamma chain. F(1) is attached to F(0) by a central stalk formed by the gamma and epsilon chains, while a peripheral stalk is formed by the delta, b and b' chains.

The protein localises to the plastid. Its subcellular location is the chloroplast thylakoid membrane. Its function is as follows. F(1)F(0) ATP synthase produces ATP from ADP in the presence of a proton or sodium gradient. F-type ATPases consist of two structural domains, F(1) containing the extramembraneous catalytic core and F(0) containing the membrane proton channel, linked together by a central stalk and a peripheral stalk. During catalysis, ATP synthesis in the catalytic domain of F(1) is coupled via a rotary mechanism of the central stalk subunits to proton translocation. In terms of biological role, component of the F(0) channel, it forms part of the peripheral stalk, linking F(1) to F(0). This is ATP synthase subunit b, chloroplastic from Lemna minor (Common duckweed).